A 264-amino-acid polypeptide reads, in one-letter code: Proliferating cell nuclear antigen (264 aa).

Residues 61-80 (RCDRNLAMGINMTSMAKIMK) mediate DNA binding.

The protein belongs to the PCNA family. In terms of assembly, homotrimer. Forms a complex with activator 1 heteropentamer in the presence of ATP.

Its subcellular location is the nucleus. Functionally, this protein is an auxiliary protein of DNA polymerase delta and is involved in the control of eukaryotic DNA replication by increasing the polymerase's processibility during elongation of the leading strand. The sequence is that of Proliferating cell nuclear antigen (PCNA) from Styela clava (Sea squirt).